A 165-amino-acid polypeptide reads, in one-letter code: DNA mimic protein DMP19 (165 aa).

The protein belongs to the DMP19-like protein family. In terms of assembly, monomer. Homodimer. The monomeric form of DMP19 interacts with the DNA-binding protein HU homodimer with 1:1 stoichiometry. The dimeric form of DMP19 interacts with the Neisseria hypothetical transcription factor (NHTF) dimer.

Its activity is regulated as follows. Activity can be modulated in vitro by crown ethers, which are small cyclic polyethers that can modify protein surface behavior dramatically by stabilizing either intra- or intermolecular interactions, thereby probably altering the protein's tertiary and quaternary structure. Its function is as follows. Acts as a DNA mimic. Interacts with DNA-binding proteins and prevents their binding to DNA by occupying the DNA binding sites on the proteins, acting as a competitive inhibitor. DMP19 is a bifunctional DNA mimic protein involved in controlling nucleoid formation as well as gene regulation. This bifunctionality depends on different oligomeric states. The monomeric form interacts with the DNA-binding protein HU, which prevents HU from binding to DNA and forming nucleoids. The dimeric form interacts with the Neisseria hypothetical transcription factor (NHTF) and prevents NHTF from binding to its DNA-binding sites, thereby blocking its repressor activity and influencing expression of the target genes. DMP19 might use these different oligomerizations to regulate genes in two steps: the monomeric form may first release selected gene regions in chromosomal DNA by preventing HU from binding to DNA and forming nucleoids, then the dimeric form blocks the gene repressor activity of NHTF and ensures the continued expression of NHTF-controlled genes. The protein is DNA mimic protein DMP19 of Neisseria meningitidis serogroup B (strain ATCC BAA-335 / MC58).